The following is a 337-amino-acid chain: Large ribosomal subunit protein uL3 (337 aa).

It belongs to the universal ribosomal protein uL3 family. In terms of assembly, part of the 50S ribosomal subunit. Forms a cluster with proteins L14 and L24e.

Functionally, one of the primary rRNA binding proteins, it binds directly near the 3'-end of the 23S rRNA, where it nucleates assembly of the 50S subunit. The sequence is that of Large ribosomal subunit protein uL3 from Methanospirillum hungatei JF-1 (strain ATCC 27890 / DSM 864 / NBRC 100397 / JF-1).